The primary structure comprises 142 residues: Small ribosomal subunit protein bS16 (142 aa).

The disordered stretch occupies residues 101 to 142 (RPSFDALGGDDAGKGEAITQKKKAEKKDEAAAESSSSESTEA). The span at 132-142 (AESSSSESTEA) shows a compositional bias: low complexity.

The protein belongs to the bacterial ribosomal protein bS16 family.

The polypeptide is Small ribosomal subunit protein bS16 (Streptomyces avermitilis (strain ATCC 31267 / DSM 46492 / JCM 5070 / NBRC 14893 / NCIMB 12804 / NRRL 8165 / MA-4680)).